We begin with the raw amino-acid sequence, 392 residues long: uncharacterized protein (392 aa).

One can recognise a J domain in the interval 7–76 (TEYYDLLGIS…RSQYDQFGKE (70 aa)). Residue serine 108 is modified to Phosphoserine.

This is an uncharacterized protein from Schizosaccharomyces pombe (strain 972 / ATCC 24843) (Fission yeast).